A 325-amino-acid polypeptide reads, in one-letter code: Aldo-keto reductase family 1 member A1 (325 aa).

At T2 the chain carries N-acetylthreonine. The residue at position 4 (S4) is a Phosphoserine. NADP(+) contacts are provided by residues 11 to 20 (GQKMPLIGLG), T21, and W22. K23 is a glycosylation site (N-linked (Glc) (glycation) lysine). S38 carries the phosphoserine modification. Residue D45 participates in NADP(+) binding. The active-site Proton donor is Y50. N-linked (Glc) (glycation) lysine glycosylation is found at K68 and K85. The residue at position 127 (K127) is an N6-acetyllysine; alternate. The residue at position 127 (K127) is an N6-succinyllysine; alternate. K141 carries N-linked (Glc) (glycation) lysine glycosylation. K145 is subject to N6-succinyllysine. K153 carries an N-linked (Glc) (glycation) lysine glycan. Residues S162, N163, S211, L213, S215, S216, K263, S264, I265, T266, R269, Q272, and N273 each coordinate NADP(+). A Phosphoserine modification is found at S211.

The protein belongs to the aldo/keto reductase family. As to quaternary structure, monomer. Widely expressed.

The protein localises to the cytoplasm. Its subcellular location is the cytosol. It is found in the apical cell membrane. The enzyme catalyses a primary alcohol + NADP(+) = an aldehyde + NADPH + H(+). It carries out the reaction L-gulonate + NADP(+) = aldehydo-D-glucuronate + NADPH + H(+). The catalysed reaction is L-gulono-1,4-lactone + NADP(+) = D-glucurono-3,6-lactone + NADPH + H(+). It catalyses the reaction allyl alcohol + NADP(+) = acrolein + NADPH + H(+). The enzyme catalyses glycerol + NADP(+) = D-glyceraldehyde + NADPH + H(+). It carries out the reaction glycerol + NADP(+) = L-glyceraldehyde + NADPH + H(+). The catalysed reaction is hydroxyacetone + NADP(+) = methylglyoxal + NADPH + H(+). It catalyses the reaction 3-deoxyfructose + NADP(+) = 3-deoxyglucosone + NADPH + H(+). The enzyme catalyses (R)-mevalonate + NADP(+) = (R)-mevaldate + NADPH + H(+). It carries out the reaction pyridine 3-methanol + NADP(+) = pyridine-3-carbaldehyde + NADPH + H(+). The catalysed reaction is S-nitroso-CoA + NADPH + H(+) = sulfinamide-CoA + NADP(+). It catalyses the reaction S-nitrosoglutathione + NADPH + H(+) = S-(hydroxysulfenamide)glutathione + NADP(+). Its function is as follows. Catalyzes the NADPH-dependent reduction of a wide variety of carbonyl-containing compounds to their corresponding alcohols. Displays enzymatic activity towards endogenous metabolites such as aromatic and aliphatic aldehydes, ketones, monosaccharides and bile acids. Plays an important role in ascorbic acid biosynthesis by catalyzing the reduction of D-glucuronic acid and D-glucurono-gamma-lactone. Functions as a detoxifiying enzyme by reducing a range of toxic aldehydes. Reduces methylglyoxal and 3-deoxyglucosone, which are present at elevated levels under hyperglycemic conditions and are cytotoxic. Involved also in the detoxification of lipid-derived aldehydes like acrolein. Plays a role in the activation of procarcinogens, such as polycyclic aromatic hydrocarbon trans-dihydrodiols, and in the metabolism of various xenobiotics and drugs. Also acts as an inhibitor of protein S-nitrosylation by mediating degradation of S-nitroso-coenzyme A (S-nitroso-CoA), a cofactor required to S-nitrosylate proteins. S-nitroso-CoA reductase activity is involved in reprogramming intermediary metabolism in renal proximal tubules, notably by inhibiting protein S-nitrosylation of isoform 2 of PKM (PKM2). Also acts as a S-nitroso-glutathione reductase by catalyzing the NADPH-dependent reduction of S-nitrosoglutathione. Displays no reductase activity towards retinoids. This chain is Aldo-keto reductase family 1 member A1 (Akr1a1), found in Rattus norvegicus (Rat).